Reading from the N-terminus, the 450-residue chain is Grayanic acid biosynthesis cluster O-methyltransferase (450 aa).

Asp-254 lines the S-adenosyl-L-methionine pocket. Residue His-301 is the Proton acceptor of the active site.

The protein belongs to the class I-like SAM-binding methyltransferase superfamily. Cation-independent O-methyltransferase family. COMT subfamily.

The protein operates within secondary metabolite biosynthesis. Functionally, non-reducing polyketide synthase; part of the gene cluster that mediates the biosynthesis of orcinol depsidone grayanic acid (GRA), the only major secondary metabolite known in C.grayi. The first step consists in the ring and depside synthesis by PKS16 leading to 4-O-demethylsphaerophorin, involving different orcinol-like rings, one with acetyl CoA and the other with octanoyl CoA as the starter. Further depsidone formation by the GRA cluster-specific cytochrome P450 leads to 4-O-demethylgrayanic acid. Finally, the cluster specific O-methyltransferase probably converts the 4-O-demethylgrayanic acid into grayanic acid. The polypeptide is Grayanic acid biosynthesis cluster O-methyltransferase (Cladonia grayi (Gray's cup lichen)).